The sequence spans 341 residues: Retinol dehydrogenase 10-A (341 aa).

The chain crosses the membrane as a helical; Signal-anchor span at residues 3–23 (IVLEFFLVTFRVLWAFVLAAG). 40-64 (LITGAGSGLGRLFALEFARRRAQLV) serves as a coordination point for NADP(+). Serine 197 serves as a coordination point for substrate. Residue tyrosine 210 is the Proton acceptor of the active site.

The protein belongs to the short-chain dehydrogenases/reductases (SDR) family.

The protein resides in the microsome membrane. Its subcellular location is the endoplasmic reticulum membrane. It carries out the reaction all-trans-retinol + NADP(+) = all-trans-retinal + NADPH + H(+). It participates in cofactor metabolism; retinol metabolism. Retinol dehydrogenase with a clear preference for NADP. Converts all-trans-retinol to all-trans-retinal. Has no detectable activity towards 11-cis-retinol, 9-cis-retinol and 13-cis-retinol. This chain is Retinol dehydrogenase 10-A (rdh10-a), found in Xenopus laevis (African clawed frog).